The primary structure comprises 134 residues: Parvalbumin-like EF-hand-containing protein (134 aa).

2 consecutive EF-hand domains span residues 55–90 (QLDD…IPSS) and 96–131 (LTDE…EKIP). Residues Asp-68, Asp-70, Ser-72, Phe-74, Glu-76, Glu-79, Asp-109, Asp-113, and Glu-120 each contribute to the Ca(2+) site.

This sequence belongs to the parvalbumin family.

This chain is Parvalbumin-like EF-hand-containing protein, found in Homo sapiens (Human).